Here is a 144-residue protein sequence, read N- to C-terminus: Large ribosomal subunit protein uL15 (144 aa).

The segment at 1 to 49 (MRLNTLSPAAGAKSAAKRVGRGIGSGLGKTAGRGHKGQKSRSGGGVRVG) is disordered. Positions 21–31 (RGIGSGLGKTA) are enriched in gly residues.

The protein belongs to the universal ribosomal protein uL15 family. In terms of assembly, part of the 50S ribosomal subunit.

Its function is as follows. Binds to the 23S rRNA. This chain is Large ribosomal subunit protein uL15, found in Shewanella piezotolerans (strain WP3 / JCM 13877).